The primary structure comprises 241 residues: Ubiquinone biosynthesis O-methyltransferase (241 aa).

S-adenosyl-L-methionine-binding residues include Arg-44, Gly-63, Asp-84, and Met-128.

This sequence belongs to the methyltransferase superfamily. UbiG/COQ3 family.

It carries out the reaction a 3-demethylubiquinol + S-adenosyl-L-methionine = a ubiquinol + S-adenosyl-L-homocysteine + H(+). The catalysed reaction is a 3-(all-trans-polyprenyl)benzene-1,2-diol + S-adenosyl-L-methionine = a 2-methoxy-6-(all-trans-polyprenyl)phenol + S-adenosyl-L-homocysteine + H(+). It functions in the pathway cofactor biosynthesis; ubiquinone biosynthesis. In terms of biological role, O-methyltransferase that catalyzes the 2 O-methylation steps in the ubiquinone biosynthetic pathway. The polypeptide is Ubiquinone biosynthesis O-methyltransferase (Hydrogenovibrio crunogenus (strain DSM 25203 / XCL-2) (Thiomicrospira crunogena)).